The primary structure comprises 240 residues: Bidirectional sugar transporter SWEET7c (240 aa).

Residues 1 to 12 are Extracellular-facing; that stretch reads MVSPDLIRNVVG. The region spanning 10–48 is the MtN3/slv 1 domain; that stretch reads VVGIVGNVISFGLFLSPVPIFWWIIKNKNVQNFKADPIL. A helical transmembrane segment spans residues 13 to 33; it reads IVGNVISFGLFLSPVPIFWWI. At 34-46 the chain is on the cytoplasmic side; it reads IKNKNVQNFKADP. The helical transmembrane segment at 47–67 threads the bilayer; sequence ILVVTINGISLVIEAVYLTIF. Residues 68-78 are Extracellular-facing; the sequence is FLFSDKKNKKK. A helical membrane pass occupies residues 79-99; sequence MGVVLATEALFMAAVAVGVLL. At 100 to 108 the chain is on the cytoplasmic side; that stretch reads GAHTHQRRS. The chain crosses the membrane as a helical span at residues 109 to 129; the sequence is LIVGILCVIFGTIMYSSPLTI. In terms of domain architecture, MtN3/slv 2 spans 110–191; sequence IVGILCVIFG…LILYAIYYRT (82 aa). Residues 130–140 lie on the Extracellular side of the membrane; that stretch reads MVVKTKSVEYM. Residues 141–161 traverse the membrane as a helical segment; it reads PLLLSVVSFLNGLCWTLYALI. The Cytoplasmic segment spans residues 162-164; the sequence is RFD. Residues 165 to 185 form a helical membrane-spanning segment; the sequence is IFITIPNGLGVLFAIMQLILY. Residues 186–240 are Extracellular-facing; the sequence is AIYYRTTPKKQDKNLELPTVAPIAKDTSIVAPVGNDDDVNGSTASHATINITIEP. N-linked (GlcNAc...) asparagine glycosylation is found at N225 and N235.

Belongs to the SWEET sugar transporter family. Forms homooligomers and/or heterooligomers.

The protein localises to the cell membrane. Mediates both low-affinity uptake and efflux of sugar across the plasma membrane. The chain is Bidirectional sugar transporter SWEET7c (SWEET7C) from Oryza sativa subsp. indica (Rice).